The following is a 308-amino-acid chain: Serine/threonine-protein phosphatase 4 catalytic subunit (308 aa).

Residues Asp51, His53, Asp79, and Asn111 each contribute to the Mn(2+) site. Residue His112 is the Proton donor of the active site. His161 and His235 together coordinate Mn(2+).

It belongs to the PPP phosphatase family. PP-4 (PP-X) subfamily. As to quaternary structure, catalytic subunit of the histone H2A phosphatase complex (HTP-C) containing PPH3, PSY2 and PSY4. Inactivated in a complex with phosphatase methylesterase PPE1 (PP2Ai). Interacts with phosphatase 2A activator RRD1, which can reactivate PP2Ai by dissociating the catalytic subunit from the complex. Interacts with SPT5 and TAP42. It depends on Mn(2+) as a cofactor. In terms of processing, reversibly methyl esterified on Leu-308 by leucine carboxyl methyltransferase 1 (PPM1) and protein phosphatase methylesterase 1 (PPE1). Carboxyl methylation influences the affinity of the catalytic subunit for the different regulatory subunits, thereby modulating the PP2A holoenzyme's substrate specificity, enzyme activity and cellular localization.

The protein resides in the cytoplasm. It localises to the nucleus. It carries out the reaction O-phospho-L-seryl-[protein] + H2O = L-seryl-[protein] + phosphate. The catalysed reaction is O-phospho-L-threonyl-[protein] + H2O = L-threonyl-[protein] + phosphate. In terms of biological role, forms the histone H2A phosphatase complex in association with the regulatory subunits PSY2 and PSY4, which dephosphorylates H2AS128ph (gamma-H2A) that has been displaced from sites of DNA lesions in the double-stranded DNA break repair process. Dephosphorylation is necessary for efficient recovery from the DNA damage checkpoint. PPH3 is directly involved in the dephosphorylation and activation of the transcription factor GLN3 in response to nutrient availability. This Saccharomyces cerevisiae (strain ATCC 204508 / S288c) (Baker's yeast) protein is Serine/threonine-protein phosphatase 4 catalytic subunit (PPH3).